A 57-amino-acid polypeptide reads, in one-letter code: UPF0057 membrane protein T23F2.3 (57 aa).

Transmembrane regions (helical) follow at residues 4 to 24 and 36 to 56; these read TCTDIPKFICAVLLPPIGVFL and ILLTILGYIPGIIYACYVILA.

Belongs to the UPF0057 (PMP3) family.

It is found in the membrane. This chain is UPF0057 membrane protein T23F2.3, found in Caenorhabditis elegans.